A 632-amino-acid polypeptide reads, in one-letter code: Chaperone protein DnaK (632 aa).

Residue Thr199 is modified to Phosphothreonine; by autocatalysis. Over residues 597–611 (AAQQAGQAEGQAAQE) the composition is skewed to low complexity. Residues 597 to 632 (AAQQAGQAEGQAAQEPSQSTGNAQAEATDAEYEEVK) form a disordered region. Over residues 612–621 (PSQSTGNAQA) the composition is skewed to polar residues.

This sequence belongs to the heat shock protein 70 family.

In terms of biological role, acts as a chaperone. This chain is Chaperone protein DnaK, found in Amoebophilus asiaticus (strain 5a2).